A 324-amino-acid chain; its full sequence is Archaeosine synthase subunit beta (324 aa).

In terms of domain architecture, Radical SAM core spans 12–254; it reads GKPGTALFII…LIWAKRKFPN (243 aa). [4Fe-4S] cluster is bound by residues Cys27, Cys36, and Cys39.

The protein belongs to the radical SAM superfamily. RaSEA family. In terms of assembly, forms a robust complex with the archaeosine synthase alpha subunit ArcS, likely an alpha(2)beta(2) heterotetrameric structure. The cofactor is [4Fe-4S] cluster.

The catalysed reaction is 7-N-[(5S)-5-amino-5-carboxypentyl]formamidino-7-deazaguanosine(15) in tRNA + S-adenosyl-L-methionine = archaeosine(15) in tRNA + L-1-piperideine-6-carboxylate + 5'-deoxyadenosine + L-methionine + 2 H(+). Its pathway is tRNA modification; archaeosine-tRNA biosynthesis. In terms of biological role, radical SAM enzyme involved in the synthesis of archaeosine, a modified nucleoside present in the dihydrouridine loop (D-loop) of archaeal tRNAs. Catalyzes the cleavage of the C(epsilon)-N bond of the lysine moiety of q0kN15-tRNA, leading to the formation of archaeosine at position 15 in tRNAs. This chain is Archaeosine synthase subunit beta, found in Thermococcus kodakarensis (strain ATCC BAA-918 / JCM 12380 / KOD1) (Pyrococcus kodakaraensis (strain KOD1)).